Here is a 290-residue protein sequence, read N- to C-terminus: uncharacterized protein (290 aa).

Helical transmembrane passes span 10–27, 32–54, 69–91, 100–117, and 121–143; these read FFVA…LLLI, VNYI…YFFS, ILVP…GVLI, VLAG…FFYF, and YLLM…NFEY. Residues 147 to 183 are a coiled coil; sequence VGKERKRILKLKKNYHKLLKEFSNFEREKRMFSNLRK.

It is found in the cell membrane. This is an uncharacterized protein from Aquifex aeolicus (strain VF5).